Reading from the N-terminus, the 212-residue chain is Deoxyribose-phosphate aldolase (212 aa).

Asp90 serves as the catalytic Proton donor/acceptor. The Schiff-base intermediate with acetaldehyde role is filled by Lys151. Lys176 functions as the Proton donor/acceptor in the catalytic mechanism.

Belongs to the DeoC/FbaB aldolase family. DeoC type 1 subfamily.

Its subcellular location is the cytoplasm. It catalyses the reaction 2-deoxy-D-ribose 5-phosphate = D-glyceraldehyde 3-phosphate + acetaldehyde. It functions in the pathway carbohydrate degradation; 2-deoxy-D-ribose 1-phosphate degradation; D-glyceraldehyde 3-phosphate and acetaldehyde from 2-deoxy-alpha-D-ribose 1-phosphate: step 2/2. Catalyzes a reversible aldol reaction between acetaldehyde and D-glyceraldehyde 3-phosphate to generate 2-deoxy-D-ribose 5-phosphate. This Halobacterium salinarum (strain ATCC 29341 / DSM 671 / R1) protein is Deoxyribose-phosphate aldolase.